Reading from the N-terminus, the 113-residue chain is Large ribosomal subunit protein bL17 (113 aa).

The protein belongs to the bacterial ribosomal protein bL17 family. In terms of assembly, part of the 50S ribosomal subunit. Contacts protein L32.

The polypeptide is Large ribosomal subunit protein bL17 (Alkaliphilus metalliredigens (strain QYMF)).